The following is a 271-amino-acid chain: NAD kinase (271 aa).

Residue Asp-64 is the Proton acceptor of the active site. Residues 64–65 (DG), Arg-69, 132–133 (NE), Lys-143, Arg-160, Asp-162, 173–178 (TAYAMS), Ala-197, and Gln-231 each bind NAD(+).

Belongs to the NAD kinase family. Requires a divalent metal cation as cofactor.

It is found in the cytoplasm. The enzyme catalyses NAD(+) + ATP = ADP + NADP(+) + H(+). Functionally, involved in the regulation of the intracellular balance of NAD and NADP, and is a key enzyme in the biosynthesis of NADP. Catalyzes specifically the phosphorylation on 2'-hydroxyl of the adenosine moiety of NAD to yield NADP. The chain is NAD kinase from Methanocorpusculum labreanum (strain ATCC 43576 / DSM 4855 / Z).